We begin with the raw amino-acid sequence, 210 residues long: Chaperone protein TorD (210 aa).

It belongs to the TorD/DmsD family. TorD subfamily.

It is found in the cytoplasm. Involved in the biogenesis of TorA. Acts on TorA before the insertion of the molybdenum cofactor and, as a result, probably favors a conformation of the apoenzyme that is competent for acquiring the cofactor. The polypeptide is Chaperone protein TorD (Salmonella paratyphi B (strain ATCC BAA-1250 / SPB7)).